We begin with the raw amino-acid sequence, 267 residues long: Cilia- and flagella-associated protein 300 (267 aa).

The protein belongs to the CFAP300 family. Interacts with DNAAF2. Expressed in nasal epithelial cells.

The protein localises to the cytoplasm. It is found in the cytoskeleton. Its subcellular location is the cilium axoneme. Functionally, cilium- and flagellum-specific protein that plays a role in axonemal structure organization and motility. May play a role in outer and inner dynein arm assembly. This is Cilia- and flagella-associated protein 300 from Homo sapiens (Human).